Consider the following 1097-residue polypeptide: Kinesin-like protein KIF1C (1097 aa).

Positions 5 to 347 constitute a Kinesin motor domain; that stretch reads SVKVAVRVRP…LRYADRTKQI (343 aa). Position 96–103 (96–103) interacts with ATP; that stretch reads GQTGAGKS. A Phosphoserine modification is found at S294. Residues 358–380 are a coiled coil; that stretch reads NARLIRELQEEVARLRELLMAQG. The segment at 397 to 434 is disordered; that stretch reads GGVLPAASSPPAPASPSSPPPHNGELEPSFSPSAEPQI. Positions 404–418 are enriched in pro residues; the sequence is SSPPAPASPSSPPPH. A coiled-coil region spans residues 437-478; that stretch reads EEAMERLQETEKIIAELNETWEEKLRKTEALRMEREALLAEM. S491 bears the Phosphoserine mark. The FHA domain maps to 520-587; the sequence is TRVGQVDVDI…LKSGNRIVMG (68 aa). Positions 630-671 form a coiled coil; it reads EQQGIDIKLEMEKRLQDLENQYRKEKEEADLLLEQQRLYADS. Residues S671 and S673 each carry the phosphoserine modification. Positions 824–868 form a coiled coil; that stretch reads AEVEDLRAHIDKLTGILQEVKLQNSSKDRELQALRDRMLRMERVI. Disordered stretches follow at residues 897–921 and 946–1097; these read EAVSNDHSPAVRPSSPPQSSWERVS and QGLQ…GAAV. S911 carries the post-translational modification Phosphoserine. Residues 949 to 958 show a composition bias toward gly residues; that stretch reads QGSGGRGGGL. The span at 997 to 1015 shows a compositional bias: pro residues; that stretch reads GPQPPEEVTAPPPPPNRRP. Basic residues predominate over residues 1016–1026; that stretch reads PSPRRPHRPRR. S1028 carries the post-translational modification Phosphoserine. An Omega-N-methylarginine modification is found at R1036. The span at 1059 to 1077 shows a compositional bias: pro residues; that stretch reads QPQPYPAQRPGPRYPPYTT. T1077 carries the phosphothreonine modification. At S1086 the chain carries Phosphoserine. Residues 1086 to 1097 are compositionally biased toward basic and acidic residues; it reads SAPDLKESGAAV.

This sequence belongs to the TRAFAC class myosin-kinesin ATPase superfamily. Kinesin family. Unc-104 subfamily.

It is found in the cytoplasm. Its subcellular location is the cytoskeleton. Probable motor protein. This chain is Kinesin-like protein KIF1C (Kif1c), found in Rattus norvegicus (Rat).